Reading from the N-terminus, the 689-residue chain is Glycine--tRNA ligase beta subunit (689 aa).

It belongs to the class-II aminoacyl-tRNA synthetase family. Tetramer of two alpha and two beta subunits.

It is found in the cytoplasm. It carries out the reaction tRNA(Gly) + glycine + ATP = glycyl-tRNA(Gly) + AMP + diphosphate. The polypeptide is Glycine--tRNA ligase beta subunit (Salmonella paratyphi A (strain ATCC 9150 / SARB42)).